Reading from the N-terminus, the 66-residue chain is Ocellatin-PT5 (66 aa).

Positions 1–22 (MAFLKKSLFLVLFLGLVSLSIC) are cleaved as a signal peptide. The propeptide occupies 23-39 (DEEKRQDEDDDDDDDEE). At valine 66 the chain carries Valine amide.

As to expression, expressed by the skin glands.

Its subcellular location is the secreted. Its function is as follows. Has antibacterial activity against Gram-negative bacterium E.coli ATCC 25922 (MIC=300 uM) but not against S.pneumoniae ATCC 700603, S.choleraesuis ATCC 14028 or Gram-positive bacterium S.aureus ATCC 29313. Shows very little hemolytic activity and no cytotoxicity. The polypeptide is Ocellatin-PT5 (Leptodactylus pustulatus (Ceara white-lipped frog)).